The primary structure comprises 436 residues: 3-ketoacyl-CoA thiolase (436 aa).

Cysteine 99 acts as the Acyl-thioester intermediate in catalysis. Residues histidine 392 and cysteine 422 each act as proton acceptor in the active site.

Belongs to the thiolase-like superfamily. Thiolase family. As to quaternary structure, heterotetramer of two alpha chains (FadJ) and two beta chains (FadI).

Its subcellular location is the cytoplasm. The catalysed reaction is an acyl-CoA + acetyl-CoA = a 3-oxoacyl-CoA + CoA. Its pathway is lipid metabolism; fatty acid beta-oxidation. In terms of biological role, catalyzes the final step of fatty acid oxidation in which acetyl-CoA is released and the CoA ester of a fatty acid two carbons shorter is formed. This is 3-ketoacyl-CoA thiolase from Salmonella paratyphi B (strain ATCC BAA-1250 / SPB7).